Here is a 570-residue protein sequence, read N- to C-terminus: MASLITTKAMMSHHHVLSSTRITTLYSDNSIGDQQIKTKPQVPHRLFARRIFGVTRAVINSAAPSPLPEKEKVEGERRCHVAWTSVQQENWEGELTVQGKIPTWLNGTYLRNGPGLWNIGDHDFRHLFDGYSTLVKLQFDGGRIFAAHRLLESDAYKAAKKHNRLCYREFSETPKSVIINKNPFSGIGEIVRLFSGESLTDNANTGVIKLGDGRVMCLTETQKGSILVDHETLETIGKFEYDDVLSDHMIQSAHPIVTETEMWTLIPDLVKPGYRVVRMEAGSNKREVVGRVRCRSGSWGPGWVHSFAVTENYVVIPEMPLRYSVKNLLRAEPTPLYKFEWCPQDGAFIHVMSKLTGEVVASVEVPAYVTFHFINAYEEDKNGDGKATVIIADCCEHNADTRILDMLRLDTLRSSHGHDVLPDARIGRFRIPLDGSKYGKLETAVEAEKHGRAMDMCSINPLYLGQKYRYVYACGAQRPCNFPNALSKVDIVEKKVKNWHEHGMIPSEPFFVPRPGATHEDDGVVISIVSEENGGSFAILLDGSSFEEIARAKFPYGLPYGLHGCWIPKD.

Residues 1–56 (MASLITTKAMMSHHHVLSSTRITTLYSDNSIGDQQIKTKPQVPHRLFARRIFGVTR) constitute a chloroplast transit peptide. The Fe cation site is built by His-254, His-305, His-372, and His-563.

This sequence belongs to the carotenoid oxygenase family. It depends on Fe(2+) as a cofactor. In terms of tissue distribution, expressed in flowers, siliques, inflorescence stems, petiole and leaves, and at a much higher level in roots.

The protein localises to the plastid. It localises to the chloroplast. The catalysed reaction is 9-cis-10'-apo-beta-carotenal + 2 O2 = (2E,4E,6E)-7-hydroxy-4-methylhepta-2,4,6-trienal + (11R)-carlactone. The enzyme catalyses all-trans-10'-apo-beta-carotenal + O2 = (2E,4E,6E)-4-methylocta-2,4,6-trienedial + 13-apo-beta-carotenone. In terms of biological role, involved in strigolactones biosynthesis by cleaving the C(27) 9-cis-10'-apo-beta-carotenal produced by CCD7. Produces the C(19) carlactone and a C(8) hydroxyaldehyde. Also shows lower activity with all-trans-10'-apo-beta-carotenal producing a C(9) dialdehyde and the C(18) 13-apo-beta-carotenone. Strigolactones are hormones that inhibit tillering and shoot branching through the MAX-dependent pathway, contribute to the regulation of shoot architectural response to phosphate-limiting conditions and function as rhizosphere signal that stimulates hyphal branching of arbuscular mycorrhizal fungi and trigger seed germination of root parasitic weeds. Also active on other carotenoid substrates like licopene or zeaxanthin. The sequence is that of Carotenoid cleavage dioxygenase 8, chloroplastic from Arabidopsis thaliana (Mouse-ear cress).